The sequence spans 4151 residues: Mycoketide-CoA synthase (4151 aa).

Residues 2-32 are a coiled coil; the sequence is VDQLQHATEALRKALVQVERLKRTNRALLER. The 424-residue stretch at 34 to 457 folds into the Ketosynthase family 3 (KS3) 1 domain; the sequence is SEPIAIVGMS…GTNAHVIIEA (424 aa). 2 module regions span residues 35–2038 and 2057–4070; these read EPIA…RTEL and DPIA…RREL. Cys-203 acts as the Acyl-thioester intermediate; for beta-ketoacyl synthase 1 activity in catalysis. Residues His-338 and His-379 each act as for beta-ketoacyl synthase 1 activity in the active site. An acyltransferase 1 region spans residues 559-880; that stretch reads VFVFPGQGSQ…AASAFVAGVA (322 aa). The active-site Acyl-ester intermediate; for acyltransferase 1 activity is the Ser-650. Positions 926 to 1048 are N-terminal hotdog fold 1; it reads HPLLGAVVDL…GILRPGSVEP (123 aa). The tract at residues 926–1194 is dehydratase 1; it reads HPLLGAVVDL…VARPVTERQL (269 aa). Residues 926-1195 form the PKS/mFAS DH 1 domain; sequence HPLLGAVVDL…ARPVTERQLL (270 aa). The active-site Proton acceptor; for dehydratase activity 1 is His-958. Residues 1060-1195 are C-terminal hotdog fold 1; that stretch reads AVTVDVADGY…ARPVTERQLL (136 aa). Catalysis depends on Asp-1120, which acts as the Proton donor; for dehydratase activity 1. Residues 1366-1671 are enoyl reductase 1; the sequence is GTFENLRLEP…QARHTGKVVM (306 aa). A beta-ketoacyl reductase 1 region spans residues 1680–1858; sequence GTVLITGGTG…AISLGWGLWD (179 aa). The active-site For beta-ketoacyl reductase 1 activity is the Tyr-1828. The 76-residue stretch at 1963 to 2038 folds into the Carrier 1 domain; that stretch reads AVLLGLVRLH…RLASYIRTEL (76 aa). Ser-1998 carries the O-(pantetheine 4'-phosphoryl)serine modification. Residues 2056 to 2480 form the Ketosynthase family 3 (KS3) 2 domain; that stretch reads EDPIAIVGMA…GTNAHVIIEA (425 aa). Residue Cys-2226 is the Acyl-thioester intermediate; for beta-ketoacyl synthase 2 activity of the active site. Residues His-2361 and His-2402 each act as for beta-ketoacyl synthase 2 activity in the active site. An acyltransferase 2 region spans residues 2582-2893; that stretch reads VFVFPGQGSQ…AVAQGFVTGM (312 aa). Ser-2672 (acyl-ester intermediate; for acyltransferase 2 activity) is an active-site residue. Residues 2940–3062 form an N-terminal hotdog fold 2 region; that stretch reads HALLGAVIDL…GALRAGSAEP (123 aa). A dehydratase 2 region spans residues 2940–3215; sequence HALLGAVIDL…ARPVTDQQLR (276 aa). The 276-residue stretch at 2940-3215 folds into the PKS/mFAS DH 2 domain; sequence HALLGAVIDL…ARPVTDQQLR (276 aa). His-2972 serves as the catalytic Proton acceptor; for dehydratase activity 2. The tract at residues 3074–3215 is C-terminal hotdog fold 2; that stretch reads AVPVEVADGY…ARPVTDQQLR (142 aa). Asp-3135 serves as the catalytic Proton donor; for dehydratase activity 2. The interval 3395 to 3701 is enoyl reductase 2; it reads GTFENLRLEL…QARHTGKVVM (307 aa). Residues 3710–3888 form a beta-ketoacyl reductase 2 region; it reads GTVLITGGTG…AISLGWGLWD (179 aa). The active-site For beta-ketoacyl reductase 2 activity is the Tyr-3858. The 76-residue stretch at 3995 to 4070 folds into the Carrier 2 domain; it reads AVLLDLVRSH…ALAGYMRREL (76 aa). Position 4030 is an O-(pantetheine 4'-phosphoryl)serine (Ser-4030).

Forms a large supramolecular assembly mediated through specific interactions between the N- and C-terminus linkers.

It catalyses the reaction a medium-chain fatty acyl-CoA + 5 (S)-methylmalonyl-CoA + 5 malonyl-CoA + 22 NADPH + 32 H(+) = a mycoketide-CoA + 10 CO2 + 22 NADP(+) + 10 CoA + 11 H2O. Its pathway is lipid metabolism; fatty acid metabolism. Functionally, involved in the synthesis of beta-D-mannosyl phosphomycoketide (MPM), an antigenic mycobacterial polyketide. Binds a fatty acyl-CoA as a starter unit, and extends it by five rounds of alternative additions of malonyl-CoA and methylmalonyl-CoA extender units. Depending on the starter unit, the enzyme forms mycoketide-CoAs of different lengths. Shows preference for small-/medium-chain starter fatty acyl substrates. Uses a hybrid modularly iterative mechanism, by forming a supramolecular assembly to perform repetitive cycles of iterations. The polypeptide is Mycoketide-CoA synthase (Mycobacterium tuberculosis (strain ATCC 25618 / H37Rv)).